A 199-amino-acid polypeptide reads, in one-letter code: MRFTVKQIAWLKVFLHLAGFLPLVWLFWAGHQGYFSADPAKDIQHFTGRMALKFLLATLLVAPLARYAKQPLLIRIRRLLGLWCFAWATLHLTSYTLLELGINNLALLGSEIINRPYLTLGMICWVILLALAATSTQAMQRKLGRRWQLLHNFVYLVAILAPIHYLWSVKIVSPQPIIYALLAVVLLACRYKKFRQWWR.

Transmembrane regions (helical) follow at residues I8–W28, F54–I74, L82–I102, P116–T136, L149–V169, and I171–Y191.

Belongs to the MsrQ family. As to quaternary structure, heterodimer of a catalytic subunit (MsrP) and a heme-binding subunit (MsrQ). FMN is required as a cofactor. Heme b serves as cofactor.

It is found in the cell inner membrane. Its function is as follows. Part of the MsrPQ system that repairs oxidized periplasmic proteins containing methionine sulfoxide residues (Met-O), using respiratory chain electrons. Thus protects these proteins from oxidative-stress damage caused by reactive species of oxygen and chlorine generated by the host defense mechanisms. MsrPQ is essential for the maintenance of envelope integrity under bleach stress, rescuing a wide series of structurally unrelated periplasmic proteins from methionine oxidation. MsrQ provides electrons for reduction to the reductase catalytic subunit MsrP, using the quinone pool of the respiratory chain. This Klebsiella pneumoniae (strain 342) protein is Protein-methionine-sulfoxide reductase heme-binding subunit MsrQ.